Here is a 437-residue protein sequence, read N- to C-terminus: GTPase Der (437 aa).

2 consecutive EngA-type G domains span residues N3–S167 and P176–M352. Residues G9–S16, D56–W60, N119–D122, G182–S189, D229–I233, and N294–D297 each bind GTP. Residues I353–K437 form the KH-like domain.

This sequence belongs to the TRAFAC class TrmE-Era-EngA-EngB-Septin-like GTPase superfamily. EngA (Der) GTPase family. In terms of assembly, associates with the 50S ribosomal subunit.

In terms of biological role, GTPase that plays an essential role in the late steps of ribosome biogenesis. This chain is GTPase Der, found in Bacteroides fragilis (strain ATCC 25285 / DSM 2151 / CCUG 4856 / JCM 11019 / LMG 10263 / NCTC 9343 / Onslow / VPI 2553 / EN-2).